Here is a 302-residue protein sequence, read N- to C-terminus: Glycine--tRNA ligase alpha subunit (302 aa).

Belongs to the class-II aminoacyl-tRNA synthetase family. Tetramer of two alpha and two beta subunits.

The protein resides in the cytoplasm. The catalysed reaction is tRNA(Gly) + glycine + ATP = glycyl-tRNA(Gly) + AMP + diphosphate. The sequence is that of Glycine--tRNA ligase alpha subunit from Haemophilus influenzae (strain PittGG).